We begin with the raw amino-acid sequence, 603 residues long: Sulfoacetaldehyde acetyltransferase (603 aa).

The protein belongs to the TPP enzyme family. Mg(2+) serves as cofactor. Thiamine diphosphate is required as a cofactor.

It carries out the reaction acetyl phosphate + sulfite + H(+) = sulfoacetaldehyde + phosphate. Functionally, catalyzes the degradation of sulfoacetaldehyde into sulfite and acetyl phosphate. Involved in sulfolactate degradation. The chain is Sulfoacetaldehyde acetyltransferase from Roseovarius nubinhibens (strain ATCC BAA-591 / DSM 15170 / ISM).